Here is a 466-residue protein sequence, read N- to C-terminus: Argininosuccinate lyase (466 aa).

It belongs to the lyase 1 family. Argininosuccinate lyase subfamily.

The protein localises to the cytoplasm. The enzyme catalyses 2-(N(omega)-L-arginino)succinate = fumarate + L-arginine. It participates in amino-acid biosynthesis; L-arginine biosynthesis; L-arginine from L-ornithine and carbamoyl phosphate: step 3/3. This is Argininosuccinate lyase from Synechococcus elongatus (strain ATCC 33912 / PCC 7942 / FACHB-805) (Anacystis nidulans R2).